The sequence spans 425 residues: 2-oxoglutarate and iron-dependent oxygenase JMJD4 homolog (425 aa).

Residues 165 to 316 (AAQMPGYNFY…MVWQNLKNNL (152 aa)) enclose the JmjC domain. Fe cation contacts are provided by His212, Asp214, and His284.

It belongs to the JMJD6 family. Fe(2+) is required as a cofactor.

Its subcellular location is the nucleus. The protein localises to the cytoplasm. The enzyme catalyses L-lysyl-[protein] + 2-oxoglutarate + O2 = 4-hydroxy-L-lysyl-[protein] + succinate + CO2. Functionally, catalyzes the 2-oxoglutarate and iron-dependent C4-lysyl hydroxylation of eRF1 thereby promoting the translational termination efficiency of eRF1. May be involved in regulation of chromatin structure, promoting expansion of heterochromatin. The protein is 2-oxoglutarate and iron-dependent oxygenase JMJD4 homolog of Drosophila melanogaster (Fruit fly).